A 607-amino-acid polypeptide reads, in one-letter code: Large ribosomal subunit assembly factor BipA (607 aa).

The 196-residue stretch at Glu3–Asp198 folds into the tr-type G domain. Residues Asp15–Thr20 and Asn128–Asp131 each bind GTP.

This sequence belongs to the TRAFAC class translation factor GTPase superfamily. Classic translation factor GTPase family. BipA subfamily. In terms of assembly, monomer.

The protein localises to the cytoplasm. It catalyses the reaction GTP + H2O = GDP + phosphate + H(+). A 50S ribosomal subunit assembly protein with GTPase activity, required for 50S subunit assembly at low temperatures, may also play a role in translation. Binds GTP and analogs. Binds the 70S ribosome between the 30S and 50S subunits, in a similar position as ribosome-bound EF-G; it contacts a number of ribosomal proteins, both rRNAs and the A-site tRNA. The sequence is that of Large ribosomal subunit assembly factor BipA from Shigella flexneri.